Consider the following 159-residue polypeptide: 6,7-dimethyl-8-ribityllumazine synthase (159 aa).

5-amino-6-(D-ribitylamino)uracil is bound by residues Trp-26, 58–60, and 80–82; these read SFE and VVI. Position 85–86 (85–86) interacts with (2S)-2-hydroxy-3-oxobutyl phosphate; the sequence is GT. The active-site Proton donor is His-88. Phe-113 provides a ligand contact to 5-amino-6-(D-ribitylamino)uracil. Arg-127 lines the (2S)-2-hydroxy-3-oxobutyl phosphate pocket.

Belongs to the DMRL synthase family.

The catalysed reaction is (2S)-2-hydroxy-3-oxobutyl phosphate + 5-amino-6-(D-ribitylamino)uracil = 6,7-dimethyl-8-(1-D-ribityl)lumazine + phosphate + 2 H2O + H(+). It functions in the pathway cofactor biosynthesis; riboflavin biosynthesis; riboflavin from 2-hydroxy-3-oxobutyl phosphate and 5-amino-6-(D-ribitylamino)uracil: step 1/2. Its function is as follows. Catalyzes the formation of 6,7-dimethyl-8-ribityllumazine by condensation of 5-amino-6-(D-ribitylamino)uracil with 3,4-dihydroxy-2-butanone 4-phosphate. This is the penultimate step in the biosynthesis of riboflavin. This is 6,7-dimethyl-8-ribityllumazine synthase from Renibacterium salmoninarum (strain ATCC 33209 / DSM 20767 / JCM 11484 / NBRC 15589 / NCIMB 2235).